The sequence spans 132 residues: Small ribosomal subunit protein uS8 (132 aa).

This sequence belongs to the universal ribosomal protein uS8 family. In terms of assembly, part of the 30S ribosomal subunit. Contacts proteins S5 and S12.

Its function is as follows. One of the primary rRNA binding proteins, it binds directly to 16S rRNA central domain where it helps coordinate assembly of the platform of the 30S subunit. In Caldicellulosiruptor bescii (strain ATCC BAA-1888 / DSM 6725 / KCTC 15123 / Z-1320) (Anaerocellum thermophilum), this protein is Small ribosomal subunit protein uS8.